The sequence spans 709 residues: Ribosomal RNA large subunit methyltransferase K/L (709 aa).

Residues 43-154 enclose the THUMP domain; the sequence is LAYRITLWTR…NGVITIAMNF (112 aa).

The protein belongs to the methyltransferase superfamily. RlmKL family.

Its subcellular location is the cytoplasm. The catalysed reaction is guanosine(2445) in 23S rRNA + S-adenosyl-L-methionine = N(2)-methylguanosine(2445) in 23S rRNA + S-adenosyl-L-homocysteine + H(+). It carries out the reaction guanosine(2069) in 23S rRNA + S-adenosyl-L-methionine = N(2)-methylguanosine(2069) in 23S rRNA + S-adenosyl-L-homocysteine + H(+). Specifically methylates the guanine in position 2445 (m2G2445) and the guanine in position 2069 (m7G2069) of 23S rRNA. In Shewanella baltica (strain OS185), this protein is Ribosomal RNA large subunit methyltransferase K/L.